We begin with the raw amino-acid sequence, 431 residues long: Adenylosuccinate synthetase (431 aa).

GTP is bound by residues Gly13 to Lys19 and Gly41 to Thr43. Catalysis depends on Asp14, which acts as the Proton acceptor. The Mg(2+) site is built by Asp14 and Gly41. Residues Asp14–Lys17, Asn39–His42, Thr130, Arg144, Gln225, Thr240, and Arg304 each bind IMP. Residue His42 is the Proton donor of the active site. Ala300 to Arg306 contributes to the substrate binding site. GTP is bound by residues Arg306, Lys332–Asp334, and Ser415–Gly417.

It belongs to the adenylosuccinate synthetase family. As to quaternary structure, homodimer. Requires Mg(2+) as cofactor.

It is found in the cytoplasm. It catalyses the reaction IMP + L-aspartate + GTP = N(6)-(1,2-dicarboxyethyl)-AMP + GDP + phosphate + 2 H(+). It participates in purine metabolism; AMP biosynthesis via de novo pathway; AMP from IMP: step 1/2. Its function is as follows. Plays an important role in the de novo pathway of purine nucleotide biosynthesis. Catalyzes the first committed step in the biosynthesis of AMP from IMP. The protein is Adenylosuccinate synthetase of Ectopseudomonas mendocina (strain ymp) (Pseudomonas mendocina).